The sequence spans 422 residues: Large ribosomal subunit protein uL4 (422 aa).

Residue A2 is modified to N-acetylalanine. K14 is modified (N6-acetyllysine). R97 bears the Omega-N-methylarginine mark. K106 carries the N6-acetyllysine modification. K239 is covalently cross-linked (Glycyl lysine isopeptide (Lys-Gly) (interchain with G-Cter in SUMO2)). K259 carries the N6-acetyllysine modification. Position 266 is a phosphothreonine (T266). Phosphoserine is present on residues S290 and S295. Citrulline is present on R300. A Glycyl lysine isopeptide (Lys-Gly) (interchain with G-Cter in SUMO2) cross-link involves residue K327. N6-acetyllysine occurs at positions 333 and 353. The disordered stretch occupies residues 359-422 (EAKSDQKGVQ…PTSEEKKAAA (64 aa)). K361 carries the post-translational modification N6-acetyllysine; alternate. K361 participates in a covalent cross-link: Glycyl lysine isopeptide (Lys-Gly) (interchain with G-Cter in SUMO1); alternate. S362 is modified (phosphoserine). Composition is skewed to basic and acidic residues over residues 376 to 385 (NKEKKAVGDK) and 402 to 422 (PAAE…KAAA).

The protein belongs to the universal ribosomal protein uL4 family. Component of the large ribosomal subunit. May bind IPO9 with low affinity. Interacts with RBM3. Citrullinated by PADI4.

The protein localises to the cytoplasm. Functionally, component of the large ribosomal subunit. The ribosome is a large ribonucleoprotein complex responsible for the synthesis of proteins in the cell. This is Large ribosomal subunit protein uL4 (RPL4) from Bos taurus (Bovine).